The primary structure comprises 81 residues: ATP synthase subunit c, chloroplastic (81 aa).

Transmembrane regions (helical) follow at residues 7 to 27 (AASVIAAGLAVGLASIGPGIG) and 57 to 77 (LAFMEALTIYGLVVALALLFA).

This sequence belongs to the ATPase C chain family. F-type ATPases have 2 components, F(1) - the catalytic core - and F(0) - the membrane proton channel. F(1) has five subunits: alpha(3), beta(3), gamma(1), delta(1), epsilon(1). F(0) has four main subunits: a(1), b(1), b'(1) and c(10-14). The alpha and beta chains form an alternating ring which encloses part of the gamma chain. F(1) is attached to F(0) by a central stalk formed by the gamma and epsilon chains, while a peripheral stalk is formed by the delta, b and b' chains.

The protein resides in the plastid. The protein localises to the chloroplast thylakoid membrane. Functionally, f(1)F(0) ATP synthase produces ATP from ADP in the presence of a proton or sodium gradient. F-type ATPases consist of two structural domains, F(1) containing the extramembraneous catalytic core and F(0) containing the membrane proton channel, linked together by a central stalk and a peripheral stalk. During catalysis, ATP synthesis in the catalytic domain of F(1) is coupled via a rotary mechanism of the central stalk subunits to proton translocation. Its function is as follows. Key component of the F(0) channel; it plays a direct role in translocation across the membrane. A homomeric c-ring of between 10-14 subunits forms the central stalk rotor element with the F(1) delta and epsilon subunits. This is ATP synthase subunit c, chloroplastic from Pelargonium hortorum (Common geranium).